The chain runs to 481 residues: Ribulose bisphosphate carboxylase large chain (481 aa).

Positions 1–2 (MS) are excised as a propeptide. Pro3 carries the post-translational modification N-acetylproline. The residue at position 14 (Lys14) is an N6,N6,N6-trimethyllysine. Residues Asn123 and Thr173 each coordinate substrate. Lys175 serves as the catalytic Proton acceptor. Lys177 contributes to the substrate binding site. Residues Lys201, Asp203, and Glu204 each contribute to the Mg(2+) site. The residue at position 201 (Lys201) is an N6-carboxylysine. His294 (proton acceptor) is an active-site residue. Residues Arg295, His327, and Ser379 each contribute to the substrate site.

It belongs to the RuBisCO large chain family. Type I subfamily. Heterohexadecamer of 8 large chains and 8 small chains; disulfide-linked. The disulfide link is formed within the large subunit homodimers. It depends on Mg(2+) as a cofactor. Post-translationally, the disulfide bond which can form in the large chain dimeric partners within the hexadecamer appears to be associated with oxidative stress and protein turnover.

The protein resides in the plastid. The catalysed reaction is 2 (2R)-3-phosphoglycerate + 2 H(+) = D-ribulose 1,5-bisphosphate + CO2 + H2O. It carries out the reaction D-ribulose 1,5-bisphosphate + O2 = 2-phosphoglycolate + (2R)-3-phosphoglycerate + 2 H(+). RuBisCO catalyzes two reactions: the carboxylation of D-ribulose 1,5-bisphosphate, the primary event in carbon dioxide fixation, as well as the oxidative fragmentation of the pentose substrate in the photorespiration process. Both reactions occur simultaneously and in competition at the same active site. This is Ribulose bisphosphate carboxylase large chain from Cuscuta obtusiflora (Peruvian dodder).